The chain runs to 89 residues: Cornifin-B (89 aa).

The disordered stretch occupies residues 1-29 (MSSQQQKQPCTPPPQLQQQQVKQPCQPPP). 8 tandem repeats follow at residues 3–14 (SQQQKQPCTPPP), 18–29 (QQQVKQPCQPPP), 31–38 (EPCIPKTK), 39–46 (EPCHPKVP), 47–54 (EPCHPKVP), 55–62 (EPCQPKVP), 63–70 (EPCHPKVP), and 71–78 (EPCPSIVT). Residues 3-29 (SQQQKQPCTPPPQLQQQQVKQPCQPPP) are 2 X 12 AA approximate repeats. The tract at residues 31-78 (EPCIPKTKEPCHPKVPEPCHPKVPEPCQPKVPEPCHPKVPEPCPSIVT) is 6 X 8 AA approximate tandem repeats.

It belongs to the cornifin (SPRR) family. In terms of processing, the N-terminus is blocked. In terms of tissue distribution, suprabasal layers of squamous-differentiated tissues such as epidermis, esophagus, tongue and trachea.

It localises to the cytoplasm. Cross-linked envelope protein of keratinocytes. It is a keratinocyte protein that first appears in the cell cytosol, but ultimately becomes cross-linked to membrane proteins by transglutaminase. All that results in the formation of an insoluble envelope beneath the plasma membrane. Can function as both amine donor and acceptor in transglutaminase-mediated cross-linkage. In Homo sapiens (Human), this protein is Cornifin-B (SPRR1B).